The following is a 246-amino-acid chain: Probable phosphatase Tola_0828 (246 aa).

Zn(2+) is bound by residues His-8, His-10, His-16, His-41, Glu-74, His-102, His-132, Asp-193, and His-195.

The protein belongs to the PHP family. Zn(2+) is required as a cofactor.

In Tolumonas auensis (strain DSM 9187 / NBRC 110442 / TA 4), this protein is Probable phosphatase Tola_0828.